Here is a 314-residue protein sequence, read N- to C-terminus: L-lactate dehydrogenase 1 (314 aa).

NAD(+) contacts are provided by residues V16, D37, K42, Y68, and 82-83; that span reads GL. Substrate contacts are provided by residues Q85, R91, and 123 to 126; that span reads NPVD. Residues 121–123 and S146 each bind NAD(+); that span reads ATN. A substrate-binding site is contributed by 151-154; sequence DSAR. Beta-D-fructose 1,6-bisphosphate is bound by residues R156 and H171. H178 (proton acceptor) is an active-site residue. Phosphotyrosine is present on Y223. T232 lines the substrate pocket.

This sequence belongs to the LDH/MDH superfamily. LDH family. As to quaternary structure, homotetramer.

The protein resides in the cytoplasm. The enzyme catalyses (S)-lactate + NAD(+) = pyruvate + NADH + H(+). It participates in fermentation; pyruvate fermentation to lactate; (S)-lactate from pyruvate: step 1/1. With respect to regulation, allosterically activated by fructose 1,6-bisphosphate (FBP). Functionally, catalyzes the conversion of lactate to pyruvate. The protein is L-lactate dehydrogenase 1 of Bacillus anthracis.